Consider the following 195-residue polypeptide: CASP-like protein 2C2 (195 aa).

The Cytoplasmic segment spans residues 1 to 18 (MAATTAAAAVPGVVRAER). Residues 19-39 (LLRGGCVVMAATAALLLGFSA) form a helical membrane-spanning segment. The Extracellular segment spans residues 40–57 (ETKTVLFVRKTAVAKDVQ). Residues 58 to 78 (ALWVLTVAAAAAAGYQFAQLV) form a helical membrane-spanning segment. Topologically, residues 79–106 (RCMYCSSSGDAGAMAVAWTSFLLDKGCA) are cytoplasmic. A helical transmembrane segment spans residues 107 to 127 (YVVFASTAAALQACMVGLIGV). Over 128 to 145 (EALQWSKLCNIYTRFCEQ) the chain is Extracellular. Residues 146-166 (AAAGMLCSFLAAAGMAVLSAF) traverse the membrane as a helical segment. The Cytoplasmic portion of the chain corresponds to 167–195 (SARRLFRLYSPAGHRRSCPRAAVLATSPH).

It belongs to the Casparian strip membrane proteins (CASP) family. Homodimer and heterodimers.

Its subcellular location is the cell membrane. This is CASP-like protein 2C2 from Oryza sativa subsp. japonica (Rice).